The primary structure comprises 298 residues: Heterogeneous nuclear ribonucleoprotein C (298 aa).

Ala2 is modified (N-acetylalanine). Residues Lys8, Lys50, Lys89, and Lys94 each participate in a glycyl lysine isopeptide (Lys-Gly) (interchain with G-Cter in SUMO2) cross-link. One can recognise an RRM domain in the interval 16 to 87; it reads SRVFIGNLNT…QVLDINLAAE (72 aa). At Ser108 the chain carries Phosphoserine. Disordered stretches follow at residues 131-177 and 204-298; these read PPPP…VKGD and EKEQ…EDDS. The Nuclear localization signal signature appears at 142–148; sequence PSKRQRV. A phosphoserine mark is found at Ser149 and Ser153. The segment covering 162 to 173 has biased composition (low complexity); that stretch reads SKSGQRGSSSKS. At Lys163 the chain carries N6-acetyllysine; alternate. A Glycyl lysine isopeptide (Lys-Gly) (interchain with G-Cter in SUMO2); alternate cross-link involves residue Lys163. A coiled-coil region spans residues 176–211; it reads GDDLQAIKKELTQIKQKVDSLLESLEKIEKEQSKQA. A Glycyl lysine isopeptide (Lys-Gly) (interchain with G-Cter in SUMO2) cross-link involves residue Lys209. Ser214, Ser216, and Ser217 each carry phosphoserine. Lys222 is covalently cross-linked (Glycyl lysine isopeptide (Lys-Gly) (interchain with G-Cter in SUMO2)). Residue Lys225 forms a Glycyl lysine isopeptide (Lys-Gly) (interchain with G-Cter in SUMO2); alternate linkage. Lys225 is covalently cross-linked (Glycyl lysine isopeptide (Lys-Gly) (interchain with G-Cter in SUMO1); alternate). Phosphoserine occurs at positions 226, 231, 232, and 234. Residues 235–246 are compositionally biased toward basic and acidic residues; sequence VKKDETNVKMES. Glycyl lysine isopeptide (Lys-Gly) (interchain with G-Cter in SUMO2) cross-links involve residues Lys236 and Lys237. A Glycyl lysine isopeptide (Lys-Gly) (interchain with G-Cter in SUMO2); alternate cross-link involves residue Lys243. Residue Lys243 forms a Glycyl lysine isopeptide (Lys-Gly) (interchain with G-Cter in SUMO); alternate linkage. A phosphoserine mark is found at Ser246 and Ser253. Positions 248–269 are enriched in acidic residues; that stretch reads AGADDSAEEGDLLDDDDNEDRG. Basic and acidic residues predominate over residues 270–279; that stretch reads DDQLELKDDE. Acidic residues predominate over residues 280–298; that stretch reads KEPEEGEDDRDSANGEDDS. A phosphoserine mark is found at Ser291 and Ser298.

It belongs to the RRM HNRPC family. RALY subfamily. As to quaternary structure, tetramer composed of 3 copies of isoform C1 and 1 copy of isoform C2. Assembly of 3 tetramers with bound pre-mRNA gives rise to a 19S complex that interacts with HNRNPA2B1 tetramers. Component of the 40S hnRNP particle. Identified in the spliceosome C complex. Interacts with IGF2BP1. Interacts with PPIA/CYPA. Phosphorylated on Ser-253 and Ser-291 in resting cells. In terms of processing, sumoylated. Sumoylation reduces affinity for mRNA. Post-translationally, ubiquitinated and degraded after nucleo-cytoplasmic transport by YWHAE.

It localises to the nucleus. In terms of biological role, binds pre-mRNA and nucleates the assembly of 40S hnRNP particles. Interacts with poly-U tracts in the 3'-UTR or 5'-UTR of mRNA and modulates the stability and the level of translation of bound mRNA molecules. Single HNRNPC tetramers bind 230-240 nucleotides. Trimers of HNRNPC tetramers bind 700 nucleotides. May play a role in the early steps of spliceosome assembly and pre-mRNA splicing. N6-methyladenosine (m6A) has been shown to alter the local structure in mRNAs and long non-coding RNAs (lncRNAs) via a mechanism named 'm(6)A-switch', facilitating binding of HNRNPC, leading to regulation of mRNA splicing. The polypeptide is Heterogeneous nuclear ribonucleoprotein C (Rattus norvegicus (Rat)).